We begin with the raw amino-acid sequence, 488 residues long: HSPB1-associated protein 1 (488 aa).

An interaction with HSPB1 region spans residues 88–208; that stretch reads ETTCNYVEAT…EDTPFLYPTR (121 aa). Positions 124-288 constitute a JmjC domain; the sequence is WAYADYKYFV…HLARVEEAIT (165 aa). The span at 369-379 shows a compositional bias: polar residues; the sequence is QTGSQNLTTGT. Residues 369–415 form a disordered region; that stretch reads QTGSQNLTTGTDKPEAASPFGPDLVPVAQRSEEPPSERGGIFGSDGK.

As to quaternary structure, interacts with CRYAB and HSPB1. Widely expressed.

It is found in the cytoplasm. May play a role in cellular stress response. The sequence is that of HSPB1-associated protein 1 (HSPBAP1) from Homo sapiens (Human).